A 440-amino-acid chain; its full sequence is uncharacterized protein (440 aa).

The first 19 residues, 1-19 (MKKLLLAASIIYFASVSLA), serve as a signal peptide directing secretion.

This is an uncharacterized protein from Rickettsia typhi (strain ATCC VR-144 / Wilmington).